The sequence spans 242 residues: Floral homeotic protein AGAMOUS (242 aa).

The 55-residue stretch at 19–73 folds into the MADS-box domain; it reads RGKIEIKRIENTTNRQVTFCKRRNGLLKKAYELSVLCDAEVALIVFSSRGRLYEY. The region spanning 103–193 is the K-box domain; the sequence is AQYYQQEASK…RAKIAETERS (91 aa).

Expressed exclusively in stamens and carpels.

It is found in the nucleus. In terms of biological role, probable transcription factor involved in regulating genes that determines stamen and carpel development in wild-type flowers. This is Floral homeotic protein AGAMOUS (AG1) from Petunia hybrida (Petunia).